The primary structure comprises 488 residues: Teichuronic acid biosynthesis protein TuaE (488 aa).

A run of 14 helical transmembrane segments spans residues 7-29 (AVHT…GAIH), 35-57 (MQMA…ATAF), 64-86 (FMAV…AIHL), 91-110 (LFLY…FGMV), 122-144 (LQVK…SLLW), 154-173 (YLAL…MYVQ), 180-202 (IVYA…NHIT), 222-244 (PTSV…FFYI), 257-274 (AIGL…FATG), 279-298 (LLGI…PPVL), 303-322 (IWLS…SKIY), 354-376 (NAWH…SYYL), 397-419 (ILAN…LIWV), and 459-476 (LFFH…VNVL).

The protein resides in the cell membrane. The protein operates within cell wall biogenesis; teichuronic acid biosynthesis. Its function is as follows. Might be involved in the polymerization of teichuronic acid repeating units after their translocation to the outer surface of the membrane. The chain is Teichuronic acid biosynthesis protein TuaE (tuaE) from Bacillus subtilis (strain 168).